The chain runs to 288 residues: Energy-coupling factor transporter ATP-binding protein EcfA2 (288 aa).

An ABC transporter domain is found at 3 to 243 (IVFEAVSHIY…RAELEAIGLG (241 aa)). 40–47 (GPTGSGKS) contacts ATP.

Belongs to the ABC transporter superfamily. Energy-coupling factor EcfA family. As to quaternary structure, forms a stable energy-coupling factor (ECF) transporter complex composed of 2 membrane-embedded substrate-binding proteins (S component), 2 ATP-binding proteins (A component) and 2 transmembrane proteins (T component).

The protein localises to the cell membrane. ATP-binding (A) component of a common energy-coupling factor (ECF) ABC-transporter complex. Unlike classic ABC transporters this ECF transporter provides the energy necessary to transport a number of different substrates. The sequence is that of Energy-coupling factor transporter ATP-binding protein EcfA2 from Symbiobacterium thermophilum (strain DSM 24528 / JCM 14929 / IAM 14863 / T).